The primary structure comprises 316 residues: Porphobilinogen deaminase (316 aa).

Cys-245 carries the S-(dipyrrolylmethanemethyl)cysteine modification.

It belongs to the HMBS family. As to quaternary structure, monomer. The cofactor is dipyrromethane.

It carries out the reaction 4 porphobilinogen + H2O = hydroxymethylbilane + 4 NH4(+). Its pathway is porphyrin-containing compound metabolism; protoporphyrin-IX biosynthesis; coproporphyrinogen-III from 5-aminolevulinate: step 2/4. The protein operates within porphyrin-containing compound metabolism; chlorophyll biosynthesis. In terms of biological role, tetrapolymerization of the monopyrrole PBG into the hydroxymethylbilane pre-uroporphyrinogen in several discrete steps. The sequence is that of Porphobilinogen deaminase from Synechococcus sp. (strain CC9311).